Here is a 424-residue protein sequence, read N- to C-terminus: UDP-N-acetylglucosamine 1-carboxyvinyltransferase (424 aa).

22 to 23 (KN) contacts phosphoenolpyruvate. Arg95 contacts UDP-N-acetyl-alpha-D-glucosamine. Cys119 functions as the Proton donor in the catalytic mechanism. Residue Cys119 is modified to 2-(S-cysteinyl)pyruvic acid O-phosphothioketal. Residues 124 to 128 (RPVDQ), Asp311, and Ile333 each bind UDP-N-acetyl-alpha-D-glucosamine.

The protein belongs to the EPSP synthase family. MurA subfamily.

The protein resides in the cytoplasm. It catalyses the reaction phosphoenolpyruvate + UDP-N-acetyl-alpha-D-glucosamine = UDP-N-acetyl-3-O-(1-carboxyvinyl)-alpha-D-glucosamine + phosphate. Its pathway is cell wall biogenesis; peptidoglycan biosynthesis. Cell wall formation. Adds enolpyruvyl to UDP-N-acetylglucosamine. This is UDP-N-acetylglucosamine 1-carboxyvinyltransferase from Polaromonas naphthalenivorans (strain CJ2).